Here is a 133-residue protein sequence, read N- to C-terminus: Large ribosomal subunit protein bL20 (133 aa).

This sequence belongs to the bacterial ribosomal protein bL20 family.

In terms of biological role, binds directly to 23S ribosomal RNA and is necessary for the in vitro assembly process of the 50S ribosomal subunit. It is not involved in the protein synthesizing functions of that subunit. The chain is Large ribosomal subunit protein bL20 from Mesorhizobium japonicum (strain LMG 29417 / CECT 9101 / MAFF 303099) (Mesorhizobium loti (strain MAFF 303099)).